The primary structure comprises 31 residues: Ranatuerin-2PL (31 aa).

The cysteines at positions 23 and 29 are disulfide-linked.

Expressed by the skin glands.

It localises to the secreted. In terms of biological role, antimicrobial activity against Gram-negative bacterium E.coli. This Lithobates palustris (Pickerel frog) protein is Ranatuerin-2PL.